The primary structure comprises 286 residues: 3-hydroxyanthranilate 3,4-dioxygenase (286 aa).

A domain A (catalytic) region spans residues 1–160; the sequence is MERCVRVKSW…SEQYRTGKPN (160 aa). Arg43 is a binding site for O2. Residues His47, Glu53, and His91 each contribute to the Fe cation site. Substrate is bound at residue Glu53. Substrate-binding residues include Arg95 and Glu105. Positions 161–177 are linker; sequence PDQLLKEPPFPLSTRSV. Residues 178–286 form a domain B region; it reads MEPMSLKAWL…QDPACKKPLG (109 aa).

This sequence belongs to the 3-HAO family. Monomer. It depends on Fe(2+) as a cofactor.

The protein resides in the cytoplasm. It localises to the cytosol. It catalyses the reaction 3-hydroxyanthranilate + O2 = (2Z,4Z)-2-amino-3-carboxymuconate 6-semialdehyde. It functions in the pathway cofactor biosynthesis; NAD(+) biosynthesis; quinolinate from L-kynurenine: step 3/3. Catalyzes the oxidative ring opening of 3-hydroxyanthranilate to 2-amino-3-carboxymuconate semialdehyde, which spontaneously cyclizes to quinolinate. This chain is 3-hydroxyanthranilate 3,4-dioxygenase (Haao), found in Rattus norvegicus (Rat).